The following is a 605-amino-acid chain: MLRQYKEQIKSSPQSCGVYKMVGDKNKVLYVGKAKNLKSRLSDYLQFENLSERIRVMLSQVIKVEIFITENEIEALLLEAQLIKSLKPLYNIVLKDGKFYPYITISKHDYPRIAKYRGKFKKNEFHYYGPFTSAAAVKQTILSLQKAFLLRVCSDQYFSSTKRPCIEYQIKRCSAPCVDKITKDDYCQSVKQARNTLLGRNKEVKEQLLFTMRKCSSEENYELAAIYRDRVKFLEQIQIQHTDFSFEKDADFFSIVREEDLACISVLSFRNKDNYGSTPYFAENCGDHSNDEILSTFLVNFYNSANIPPIQIYVPDSIVDKEIIEQALYKVAQKPVKVLHAKNKKERDLLKFVYDNSQHSLEQKLIDYRNNLEKLEELSKIFLLPNIPKRIEVYDNSHIFGNQQIGVMVVAGQEGFLKSEYRKFTIKEKFSGDDYKMMREVLTRRFSGNIKGIIPDFLLIDGGPGHVSIVQNVLEVLNINVPFACMAKGPDRNAGNERFYMLGREEFSLANDSKVMLYLQSLRNEAHRFAITSHRKKRDKQFIVSQLSKIPGIGNKRKKALMSYFGSVKNISKASLAEIQNIPGISKGLAEVILKHVNYKRGVLE.

A GIY-YIG domain is found at 14-92 (QSCGVYKMVG…IKSLKPLYNI (79 aa)). A UVR domain is found at 202 to 237 (KEVKEQLLFTMRKCSSEENYELAAIYRDRVKFLEQI).

The protein belongs to the UvrC family. Interacts with UvrB in an incision complex.

It is found in the cytoplasm. Functionally, the UvrABC repair system catalyzes the recognition and processing of DNA lesions. UvrC both incises the 5' and 3' sides of the lesion. The N-terminal half is responsible for the 3' incision and the C-terminal half is responsible for the 5' incision. The protein is UvrABC system protein C of Wolbachia sp. subsp. Drosophila simulans (strain wRi).